Reading from the N-terminus, the 661-residue chain is UvrABC system protein B (661 aa).

Positions 25 to 182 (AGLNSKKRSQ…SDLVNLQYER (158 aa)) constitute a Helicase ATP-binding domain. 38 to 45 (GITGSGKT) is an ATP binding site. Positions 91-114 (YYDYYQPEAYIARTDTFIEKDSSI) match the Beta-hairpin motif. Residues 430-592 (QVEDLISEIQ…IIPQTINRTI (163 aa)) enclose the Helicase C-terminal domain. Residues 621-656 (KAHIYKLKKAMLKAASNLEFEQATKLRDQLKNLEEA) form the UVR domain.

Belongs to the UvrB family. In terms of assembly, forms a heterotetramer with UvrA during the search for lesions. Interacts with UvrC in an incision complex.

It localises to the cytoplasm. The UvrABC repair system catalyzes the recognition and processing of DNA lesions. A damage recognition complex composed of 2 UvrA and 2 UvrB subunits scans DNA for abnormalities. Upon binding of the UvrA(2)B(2) complex to a putative damaged site, the DNA wraps around one UvrB monomer. DNA wrap is dependent on ATP binding by UvrB and probably causes local melting of the DNA helix, facilitating insertion of UvrB beta-hairpin between the DNA strands. Then UvrB probes one DNA strand for the presence of a lesion. If a lesion is found the UvrA subunits dissociate and the UvrB-DNA preincision complex is formed. This complex is subsequently bound by UvrC and the second UvrB is released. If no lesion is found, the DNA wraps around the other UvrB subunit that will check the other stand for damage. This chain is UvrABC system protein B, found in Rickettsia canadensis (strain McKiel).